A 334-amino-acid polypeptide reads, in one-letter code: Large ribosomal subunit protein uL3 (334 aa).

Positions 1-10 are enriched in basic residues; the sequence is MGMKKNRPRR. The segment at 1 to 21 is disordered; sequence MGMKKNRPRRGSLAFSPRKRA.

Belongs to the universal ribosomal protein uL3 family. Part of the 50S ribosomal subunit. Forms a cluster with proteins L14 and L24e.

Functionally, one of the primary rRNA binding proteins, it binds directly near the 3'-end of the 23S rRNA, where it nucleates assembly of the 50S subunit. This Methanococcus vannielii (strain ATCC 35089 / DSM 1224 / JCM 13029 / OCM 148 / SB) protein is Large ribosomal subunit protein uL3.